The primary structure comprises 123 residues: Putative iron-sulfur cluster insertion protein ErpA (123 aa).

3 residues coordinate iron-sulfur cluster: Cys-51, Cys-115, and Cys-117.

Belongs to the HesB/IscA family. Homodimer. It depends on iron-sulfur cluster as a cofactor.

Required for insertion of 4Fe-4S clusters. This chain is Putative iron-sulfur cluster insertion protein ErpA, found in Burkholderia multivorans (strain ATCC 17616 / 249).